A 90-amino-acid polypeptide reads, in one-letter code: Phosphoribosyl-ATP pyrophosphatase (90 aa).

It belongs to the PRA-PH family.

The protein resides in the cytoplasm. The catalysed reaction is 1-(5-phospho-beta-D-ribosyl)-ATP + H2O = 1-(5-phospho-beta-D-ribosyl)-5'-AMP + diphosphate + H(+). Its pathway is amino-acid biosynthesis; L-histidine biosynthesis; L-histidine from 5-phospho-alpha-D-ribose 1-diphosphate: step 2/9. This is Phosphoribosyl-ATP pyrophosphatase (hisE) from Streptomyces coelicolor (strain ATCC BAA-471 / A3(2) / M145).